The chain runs to 756 residues: 5-methyltetrahydropteroyltriglutamate--homocysteine methyltransferase (756 aa).

5-methyltetrahydropteroyltri-L-glutamate is bound by residues 20 to 23 (RELK) and Lys-114. L-homocysteine is bound by residues 433–435 (IGS) and Glu-486. Residues 433–435 (IGS) and Glu-486 contribute to the L-methionine site. Residues 517–518 (RC) and Trp-563 each bind 5-methyltetrahydropteroyltri-L-glutamate. Asp-601 provides a ligand contact to L-homocysteine. An L-methionine-binding site is contributed by Asp-601. A 5-methyltetrahydropteroyltri-L-glutamate-binding site is contributed by Glu-607. Residues His-643, Cys-645, and Glu-667 each coordinate Zn(2+). The active-site Proton donor is the His-696. A Zn(2+)-binding site is contributed by Cys-728.

Belongs to the vitamin-B12 independent methionine synthase family. It depends on Zn(2+) as a cofactor.

It catalyses the reaction 5-methyltetrahydropteroyltri-L-glutamate + L-homocysteine = tetrahydropteroyltri-L-glutamate + L-methionine. The protein operates within amino-acid biosynthesis; L-methionine biosynthesis via de novo pathway; L-methionine from L-homocysteine (MetE route): step 1/1. Its function is as follows. Catalyzes the transfer of a methyl group from 5-methyltetrahydrofolate to homocysteine resulting in methionine formation. This Mycolicibacterium paratuberculosis (strain ATCC BAA-968 / K-10) (Mycobacterium paratuberculosis) protein is 5-methyltetrahydropteroyltriglutamate--homocysteine methyltransferase.